Reading from the N-terminus, the 276-residue chain is NAD-capped RNA hydrolase NudC (276 aa).

Arg82 is a binding site for substrate. Cys112 and Cys115 together coordinate Zn(2+). Residue Glu125 coordinates substrate. Zn(2+) is bound by residues Cys130 and Cys133. Residue Tyr138 coordinates substrate. Positions 139 to 262 (PRISPSMIVL…SIARYLIDLY (124 aa)) constitute a Nudix hydrolase domain. The a divalent metal cation site is built by Ala172, Glu188, and Glu192. Positions 173–194 (GFAEPGESAEDCLIREVREEVS) match the Nudix box motif. Residue 206 to 213 (QCWPFPHS) coordinates substrate. An a divalent metal cation-binding site is contributed by Glu233. Ala255 provides a ligand contact to substrate.

It belongs to the Nudix hydrolase family. NudC subfamily. Homodimer. Mg(2+) serves as cofactor. Mn(2+) is required as a cofactor. Requires Zn(2+) as cofactor.

It catalyses the reaction a 5'-end NAD(+)-phospho-ribonucleoside in mRNA + H2O = a 5'-end phospho-adenosine-phospho-ribonucleoside in mRNA + beta-nicotinamide D-ribonucleotide + 2 H(+). It carries out the reaction NAD(+) + H2O = beta-nicotinamide D-ribonucleotide + AMP + 2 H(+). The enzyme catalyses NADH + H2O = reduced beta-nicotinamide D-ribonucleotide + AMP + 2 H(+). In terms of biological role, mRNA decapping enzyme that specifically removes the nicotinamide adenine dinucleotide (NAD) cap from a subset of mRNAs by hydrolyzing the diphosphate linkage to produce nicotinamide mononucleotide (NMN) and 5' monophosphate mRNA. The NAD-cap is present at the 5'-end of some mRNAs and stabilizes RNA against 5'-processing. Has preference for mRNAs with a 5'-end purine. Catalyzes the hydrolysis of a broad range of dinucleotide pyrophosphates. The polypeptide is NAD-capped RNA hydrolase NudC (Pseudomonas fluorescens (strain ATCC BAA-477 / NRRL B-23932 / Pf-5)).